The primary structure comprises 2150 residues: A disintegrin and metalloproteinase with thrombospondin motifs gon-1 (2150 aa).

The first 28 residues, 1–28 (MRSIGGSFHLLQPVVAALILLVVCLVYA), serve as a signal peptide directing secretion. A propeptide spanning residues 29 to 273 (LQSGSGTISE…VIERKARSRR (245 aa)) is cleaved from the precursor. N-linked (GlcNAc...) asparagine glycans are attached at residues Asn134, Asn213, Asn243, and Asn248. One can recognise a Peptidase M12B domain in the interval 280 to 493 (HYVEVLVVAD…GQTQCLFDQP (214 aa)). 2 cysteine pairs are disulfide-bonded: Cys402–Cys488 and Cys440–Cys470. His424 contacts Zn(2+). Glu425 is a catalytic residue. Zn(2+) is bound by residues His428 and His434. Positions 503-587 (FVRDEPGKKY…RLAPESLTKI (85 aa)) constitute a Disintegrin domain. Residues 588 to 643 (DGQWGDWRSWGECSRTCGGGVQKGLRDCDSPKPRNGGKYCVGQRERYRSCNTQECP) form the TSP type-1 1 domain. 3 disulfides stabilise this stretch: Cys600/Cys637, Cys604/Cys642, and Cys615/Cys627. N-linked (GlcNAc...) asparagine glycosylation occurs at Asn842. TSP type-1 domains lie at 943–1003 (CSTR…IDCS), 1004–1057 (GRKW…RECN), 1060–1115 (PCPR…HACT), 1116–1165 (WWQF…KPCH), 1168–1227 (SCPK…GTCP), 1228–1277 (FWRN…QTCH), 1280–1339 (PCTS…DTCD), 1352–1409 (PPIR…RDCS), 1410–1469 (YWKM…EPCP), 1474–1524 (HIGS…ELCP), and 1527–1585 (TNNS…PPCR). N-linked (GlcNAc...) asparagine glycosylation is found at Asn1139 and Asn1199. N-linked (GlcNAc...) asparagine glycosylation is found at Asn1370 and Asn1432. Asn1528, Asn1590, Asn1606, and Asn1654 each carry an N-linked (GlcNAc...) asparagine glycan. The tract at residues 1590–1614 (NKTSSASMTSLSSSNSNTTSSASAS) is disordered. Over residues 1592 to 1614 (TSSASMTSLSSSNSNTTSSASAS) the composition is skewed to low complexity. 5 consecutive TSP type-1 domains span residues 1621 to 1675 (PVVS…VRCR), 1678 to 1736 (HCPR…VACP), 1737 to 1793 (AYRW…DTSN), 1794 to 1866 (CPYE…NPCD), and 1867 to 1924 (SEFK…RNCL). 6 cysteine pairs are disulfide-bonded: Cys1679–Cys1718, Cys1690–Cys1694, Cys1690–Cys1730, Cys1694–Cys1735, Cys1705–Cys1718, and Cys1730–Cys1735. 2 N-linked (GlcNAc...) asparagine glycosylation sites follow: Asn1828 and Asn1855. The region spanning 1924–2123 (LPSTCQELKS…RYKGLIFEVN (200 aa)) is the GON domain. N-linked (GlcNAc...) asparagine glycosylation is found at Asn1942, Asn1960, and Asn1997.

The cofactor is Zn(2+). As to expression, expressed by the gonadal distal tip cells (DTCs). Expressed in muscles, including body wall, vulval and anal depressor muscles. Expressed in motor neurons and in ASI and ASJ neurons.

Its subcellular location is the secreted. It is found in the extracellular space. It localises to the extracellular matrix. The protein resides in the basement membrane. The protein localises to the endoplasmic reticulum. Its subcellular location is the golgi apparatus. Functionally, secreted metalloprotease required for distal tip cell (DTC) migration along the body wall basement membranes, a key step that promotes gonad morphogenesis. Probably acts by remodeling the basement membrane during cell migration. Required to restrict presynaptic growth at the neuromuscular junctions (NMJ) in late larval stage and in adult motor neurons, probably by controlling collagen IV emb-9 degradation, a component of the synapse basement membrane. Also involved in the organization of adult muscle morphology. Has a protease-independent function in promoting the transport from the endoplasmic reticulum to the Golgi apparatus of a variety of secretory cargos. Required for the secretion of insulin-like peptide ins-7, daf-28 and ins-18 and TGF beta-like protein daf-7. In peripheral tissues, negatively regulates insulin-mediated daf-16 translocation and thereby negatively regulates lifespan and dauer formation. The polypeptide is A disintegrin and metalloproteinase with thrombospondin motifs gon-1 (Caenorhabditis elegans).